A 154-amino-acid polypeptide reads, in one-letter code: 6,7-dimethyl-8-ribityllumazine synthase (154 aa).

5-amino-6-(D-ribitylamino)uracil is bound by residues Phe23, 57–59 (AFE), and 81–83 (AVI). Residue 86–87 (AT) coordinates (2S)-2-hydroxy-3-oxobutyl phosphate. The active-site Proton donor is His89. Position 114 (Phe114) interacts with 5-amino-6-(D-ribitylamino)uracil. Residue Arg128 participates in (2S)-2-hydroxy-3-oxobutyl phosphate binding.

This sequence belongs to the DMRL synthase family.

The enzyme catalyses (2S)-2-hydroxy-3-oxobutyl phosphate + 5-amino-6-(D-ribitylamino)uracil = 6,7-dimethyl-8-(1-D-ribityl)lumazine + phosphate + 2 H2O + H(+). It participates in cofactor biosynthesis; riboflavin biosynthesis; riboflavin from 2-hydroxy-3-oxobutyl phosphate and 5-amino-6-(D-ribitylamino)uracil: step 1/2. Catalyzes the formation of 6,7-dimethyl-8-ribityllumazine by condensation of 5-amino-6-(D-ribitylamino)uracil with 3,4-dihydroxy-2-butanone 4-phosphate. This is the penultimate step in the biosynthesis of riboflavin. This Nautilia profundicola (strain ATCC BAA-1463 / DSM 18972 / AmH) protein is 6,7-dimethyl-8-ribityllumazine synthase.